The sequence spans 720 residues: DNA ligase (720 aa).

NAD(+)-binding positions include 57 to 61 (DAEYD), 106 to 107 (SL), and Glu140. Lys142 functions as the N6-AMP-lysine intermediate in the catalytic mechanism. Positions 163, 200, 316, and 340 each coordinate NAD(+). The Zn(2+) site is built by Cys434, Cys437, Cys458, and Cys464. Positions 643-720 (AAASPVSGKT…TEDEWFELVG (78 aa)) constitute a BRCT domain.

It belongs to the NAD-dependent DNA ligase family. LigA subfamily. It depends on Mg(2+) as a cofactor. Mn(2+) serves as cofactor.

The enzyme catalyses NAD(+) + (deoxyribonucleotide)n-3'-hydroxyl + 5'-phospho-(deoxyribonucleotide)m = (deoxyribonucleotide)n+m + AMP + beta-nicotinamide D-nucleotide.. In terms of biological role, DNA ligase that catalyzes the formation of phosphodiester linkages between 5'-phosphoryl and 3'-hydroxyl groups in double-stranded DNA using NAD as a coenzyme and as the energy source for the reaction. It is essential for DNA replication and repair of damaged DNA. The polypeptide is DNA ligase (Xanthobacter autotrophicus (strain ATCC BAA-1158 / Py2)).